A 374-amino-acid polypeptide reads, in one-letter code: GDSL esterase/lipase At1g71250 (374 aa).

An N-terminal signal peptide occupies residues 1-28; it reads MNTNRKKMKVHIGGYVLILALTVSVILQ. Residue Ser-48 is the Nucleophile of the active site. Residue Asn-162 is glycosylated (N-linked (GlcNAc...) asparagine). Residues Asp-338 and His-341 contribute to the active site.

It belongs to the 'GDSL' lipolytic enzyme family.

The protein localises to the secreted. This is GDSL esterase/lipase At1g71250 from Arabidopsis thaliana (Mouse-ear cress).